Reading from the N-terminus, the 150-residue chain is MKYQQLENLESGWKWKYLVKKHREGELITRYIEASAAQEAVDVLLSLENEPVLVNGWIDKHMNPELVNRMKQTIRARRKRHFNAEHQHTRKKSIDLEFIVWQRLAGLAQRRGKTLSETIVQLIEDAENKEKYANKMSSLKHDLQALLGKE.

The protein belongs to the MatP family. As to quaternary structure, homodimer.

The protein resides in the cytoplasm. Its function is as follows. Required for spatial organization of the terminus region of the chromosome (Ter macrodomain) during the cell cycle. Prevents early segregation of duplicated Ter macrodomains during cell division. Binds specifically to matS, which is a 13 bp signature motif repeated within the Ter macrodomain. This Escherichia coli O8 (strain IAI1) protein is Macrodomain Ter protein.